Here is a 492-residue protein sequence, read N- to C-terminus: Katanin p60 ATPase-containing subunit A1 (492 aa).

A disordered region spans residues 80–186; that stretch reads STPPKASQQE…ESEPKKFDST (107 aa). The span at 145 to 171 shows a compositional bias: basic and acidic residues; it reads PNDKGKAVRGREKKDQQNKGKEEKSKS. An ATP-binding site is contributed by 250 to 257; sequence GPPGTGKT.

Belongs to the AAA ATPase family. Katanin p60 subunit A1 subfamily. In terms of assembly, can homooligomerize into hexameric rings, which may be promoted by interaction with microtubules. Interacts with KATNB1, which may serve as a targeting subunit.

The protein resides in the cytoplasm. It is found in the cytoskeleton. It localises to the microtubule organizing center. The protein localises to the centrosome. Its subcellular location is the spindle pole. The protein resides in the spindle. The catalysed reaction is n ATP + n H2O + a microtubule = n ADP + n phosphate + (n+1) alpha/beta tubulin heterodimers.. ATPase activity is stimulated by microtubules, which promote homooligomerization. ATP-dependent microtubule severing is stimulated by interaction with KATNB1. Functionally, catalytic subunit of a complex which severs microtubules in an ATP-dependent manner. Microtubule severing may promote rapid reorganization of cellular microtubule arrays and the release of microtubules from the centrosome following nucleation. In Gallus gallus (Chicken), this protein is Katanin p60 ATPase-containing subunit A1.